The sequence spans 516 residues: 7-chloro-L-tryptophan 6-halogenase KtzR (516 aa).

FAD contacts are provided by glycine 6, threonine 8, alanine 9, glutamate 42, and alanine 43. Lysine 71 is an active-site residue. Valine 195 provides a ligand contact to FAD. Residues threonine 357 and glycine 358 each contribute to the chloride site. Isoleucine 359 provides a ligand contact to FAD.

It belongs to the flavin-dependent halogenase family. Bacterial tryptophan halogenase subfamily.

The enzyme catalyses 7-chloro-L-tryptophan + FADH2 + chloride + O2 = 6,7-dichloro-L-tryptophan + FAD + 2 H2O. Functionally, involved in the biosynthesis of kutznerides, actinomycete-derived antifungal and antimicrobial cyclic hexadepsipeptides. Together with KtzQ, catalyzes the regiospecific dichlorination of L-tryptophan (L-Trp) to produce 6,7-dichloro-L-tryptophan. KtzR catalyzes the chlorination of 7-chloro-L-tryptophan at C6 position to yield 6,7-dichloro-L-tryptophan. Can also use L-Trp as substrate and form 6-chloro-L-tryptophan, but has a 120-fold preference for 7-chloro-L-tryptophan over L-Trp. Cannot use piperazic acid or gamma,delta-dehydropiperazic acid. This Kutzneria sp. (strain 744) protein is 7-chloro-L-tryptophan 6-halogenase KtzR.